The following is a 406-amino-acid chain: Propionate kinase (406 aa).

ATP contacts are provided by asparagine 11 and lysine 18. Asparagine 11 provides a ligand contact to Mg(2+). Arginine 86 provides a ligand contact to substrate. The Proton donor/acceptor role is filled by aspartate 143. ATP-binding positions include histidine 175, 203 to 207 (HLGNG), 278 to 280 (DMR), and 326 to 330 (GIGEN).

This sequence belongs to the acetokinase family. TdcD subfamily. Homodimer. It depends on Mg(2+) as a cofactor.

It carries out the reaction propanoate + ATP = propanoyl phosphate + ADP. It functions in the pathway amino-acid degradation; L-threonine degradation via propanoate pathway; propanoate from L-threonine: step 4/4. Functionally, catalyzes the conversion of propionyl phosphate and ADP to propionate and ATP. This Yersinia enterocolitica serotype O:8 / biotype 1B (strain NCTC 13174 / 8081) protein is Propionate kinase.